Reading from the N-terminus, the 367-residue chain is Aminomethyltransferase (367 aa).

Belongs to the GcvT family. In terms of assembly, the glycine cleavage system is composed of four proteins: P, T, L and H.

It carries out the reaction N(6)-[(R)-S(8)-aminomethyldihydrolipoyl]-L-lysyl-[protein] + (6S)-5,6,7,8-tetrahydrofolate = N(6)-[(R)-dihydrolipoyl]-L-lysyl-[protein] + (6R)-5,10-methylene-5,6,7,8-tetrahydrofolate + NH4(+). Its function is as follows. The glycine cleavage system catalyzes the degradation of glycine. The protein is Aminomethyltransferase of Mycobacterium avium (strain 104).